The sequence spans 624 residues: MNESLTEKRNELSLSFAALGVVFGDIGTSPLYAFGQVIKYFPINDYNIYGILSLIFWSLIIIVSIKYLVIVFRADNDGEGGIIALAGVIRQKIKKPGGWLLFITLVGIGLIIGDGMLTPAISILSAVEGLESLSPNLAKYVLPVTLIILFFLFKMQSIGTGKIGVYFAPVMLVWFITIGILGFLQIIQNPKVLMAINPYYAINFFMIHQYSALFILGGVFLVMTGGEALFADLGHFGKKAIRTGWFAVALPALLLCYFGQGAFVLMHTEDIKYPFFSLSPDWFLPVMIILATLATIIASQAIISAAFSILKQASLLNLIPRLKIVFTSKFEKGEVYLPLINFILALGTCSLVVIFKSSSNLADAYGIAVNLDMLITTVLVGIIAYRCWSWHAFKILIFLLILIIELAFFAGNIPKLLTGGWIPVLIAFLGFVVMYTWHCGFEKLRELHHRDALMDAFIIDELNQNKISRQPGMGLYIIDPYDYEGESLLHHLRLNRIFFENMVFVSIKIENKPYIPIEDKFELIKKAEGFYLIFIHYGFTENINLPNELDEMFKRVYLPFDIIKNKLIYFIEIVFVEMTGERQKHMYLWQKHFFSLMIRNAVPDIQFYQLPYNNTIAIGTYYQF.

Transmembrane regions (helical) follow at residues 14 to 34 (LSFA…LYAF), 51 to 71 (ILSL…LVIV), 97 to 117 (GGWL…DGML), 133 to 153 (LSPN…FFLF), 163 to 183 (IGVY…ILGF), 211 to 231 (SALF…ALFA), 245 to 265 (WFAV…AFVL), 283 to 303 (FLPV…QAII), 335 to 355 (VYLP…VVIF), 364 to 384 (AYGI…GIIA), 393 to 413 (FKIL…AGNI), and 416 to 436 (LLTG…VMYT).

It belongs to the HAK/KUP transporter (TC 2.A.72) family.

The protein localises to the cell inner membrane. The catalysed reaction is K(+)(in) + H(+)(in) = K(+)(out) + H(+)(out). Functionally, transport of potassium into the cell. Likely operates as a K(+):H(+) symporter. The protein is Probable potassium transport system protein Kup 2 of Legionella pneumophila (strain Lens).